A 487-amino-acid chain; its full sequence is Probable peptidoglycan glycosyltransferase FtsW (487 aa).

The next 9 helical transmembrane spans lie at V30 to A50, I71 to W91, T93 to G113, W122 to C142, V167 to V187, L203 to F223, F282 to L302, I332 to P352, and F358 to L378. 2 disordered regions span residues K398–K419 and I444–V487. Polar residues predominate over residues A401 to S416. Residues I444–Q453 are compositionally biased toward acidic residues.

The protein belongs to the SEDS family. FtsW subfamily.

The protein resides in the cell inner membrane. The catalysed reaction is [GlcNAc-(1-&gt;4)-Mur2Ac(oyl-L-Ala-gamma-D-Glu-L-Lys-D-Ala-D-Ala)](n)-di-trans,octa-cis-undecaprenyl diphosphate + beta-D-GlcNAc-(1-&gt;4)-Mur2Ac(oyl-L-Ala-gamma-D-Glu-L-Lys-D-Ala-D-Ala)-di-trans,octa-cis-undecaprenyl diphosphate = [GlcNAc-(1-&gt;4)-Mur2Ac(oyl-L-Ala-gamma-D-Glu-L-Lys-D-Ala-D-Ala)](n+1)-di-trans,octa-cis-undecaprenyl diphosphate + di-trans,octa-cis-undecaprenyl diphosphate + H(+). The protein operates within cell wall biogenesis; peptidoglycan biosynthesis. Peptidoglycan polymerase that is essential for cell division. The protein is Probable peptidoglycan glycosyltransferase FtsW of Pseudoalteromonas atlantica (strain T6c / ATCC BAA-1087).